The primary structure comprises 190 residues: Small ribosomal subunit protein uS4 (190 aa).

Residues 106-178 (RRLQTVVFKH…GRVKRVKRNA (73 aa)) enclose the S4 RNA-binding domain. The disordered stretch occupies residues 166–190 (GRPGRVKRVKRNAAKKGSGGGDDDE). Over residues 169–179 (GRVKRVKRNAA) the composition is skewed to basic residues.

The protein belongs to the universal ribosomal protein uS4 family.

In Trypanosoma brucei brucei, this protein is Small ribosomal subunit protein uS4.